Consider the following 247-residue polypeptide: Triosephosphate isomerase (247 aa).

2 residues coordinate substrate: N10 and K12. Catalysis depends on H94, which acts as the Electrophile. Catalysis depends on E164, which acts as the Proton acceptor.

It belongs to the triosephosphate isomerase family. As to quaternary structure, homodimer.

Its subcellular location is the cytoplasm. The catalysed reaction is D-glyceraldehyde 3-phosphate = dihydroxyacetone phosphate. The enzyme catalyses dihydroxyacetone phosphate = methylglyoxal + phosphate. Its pathway is carbohydrate biosynthesis; gluconeogenesis. The protein operates within carbohydrate degradation; glycolysis; D-glyceraldehyde 3-phosphate from glycerone phosphate: step 1/1. Functionally, triosephosphate isomerase is an extremely efficient metabolic enzyme that catalyzes the interconversion between dihydroxyacetone phosphate (DHAP) and D-glyceraldehyde-3-phosphate (G3P) in glycolysis and gluconeogenesis. It is also responsible for the non-negligible production of methylglyoxal a reactive cytotoxic side-product that modifies and can alter proteins, DNA and lipids. The protein is Triosephosphate isomerase of Latimeria chalumnae (Coelacanth).